The following is a 31-amino-acid chain: Cyclotide mden-N (31 aa).

Residues 1-31 constitute a cross-link (cyclopeptide (Gly-Asn)); it reads GTIPCGESCVYIPCLTSALGCSCKNKVCYRN. 3 disulfide bridges follow: cysteine 5/cysteine 21, cysteine 9/cysteine 23, and cysteine 14/cysteine 28.

Belongs to the cyclotide family. Bracelet subfamily. Post-translationally, this is a cyclic peptide.

Probably participates in a plant defense mechanism. The sequence is that of Cyclotide mden-N from Melicytus dentatus (Tree violet).